Reading from the N-terminus, the 248-residue chain is Transcription factor Spi-C (248 aa).

Positions 111-194 (LRLFEYLHES…IRRKLTYQFS (84 aa)) form a DNA-binding region, ETS.

It belongs to the ETS family. In terms of assembly, binds DNA as a monomer.

It localises to the nucleus. In terms of biological role, controls the development of red pulp macrophages required for red blood cells recycling and iron homeostasis. Transcription factor that binds to the PU-box, a purine-rich DNA sequence (5'-GAGGA[AT]-3') that can act as a lymphoid-specific enhancer. Regulates VCAM1 gene expression. In Bos taurus (Bovine), this protein is Transcription factor Spi-C (SPIC).